We begin with the raw amino-acid sequence, 243 residues long: MNLIIDIGNTVAKVALFDRTSMVEVVYDSNQSLDSLEAVCNKYDVRKAIVATVIDLNECVLAQLNKLPVPVLWLDSHTSLPVINLYETPETLGYDRMAAVVAAHDQFPGKDILVIDAGTCITYEFVDSLGQYHGGNISPGLWMRLKALHQFTGRLPLVHAEGRMPDMGKDTETAIRAGVKKGIEYEITGYITAMKHKYPELLVFLTGGDDFSFDTKLKSVIFADRFLVLKGLNRILNYNNGRI.

An ATP-binding site is contributed by 6-13 (DIGNTVAK). Residues tyrosine 86 and 93 to 96 (GYDR) each bind substrate. Aspartate 95 serves as the catalytic Proton acceptor. Residue aspartate 116 participates in K(+) binding. Residue threonine 119 participates in ATP binding. Threonine 171 contacts substrate.

The protein belongs to the type III pantothenate kinase family. In terms of assembly, homodimer. NH4(+) is required as a cofactor. K(+) serves as cofactor.

Its subcellular location is the cytoplasm. It catalyses the reaction (R)-pantothenate + ATP = (R)-4'-phosphopantothenate + ADP + H(+). It participates in cofactor biosynthesis; coenzyme A biosynthesis; CoA from (R)-pantothenate: step 1/5. In terms of biological role, catalyzes the phosphorylation of pantothenate (Pan), the first step in CoA biosynthesis. In Bacteroides fragilis (strain YCH46), this protein is Type III pantothenate kinase.